The chain runs to 371 residues: Aminomethyltransferase (371 aa).

It belongs to the GcvT family. The glycine cleavage system is composed of four proteins: P, T, L and H.

It catalyses the reaction N(6)-[(R)-S(8)-aminomethyldihydrolipoyl]-L-lysyl-[protein] + (6S)-5,6,7,8-tetrahydrofolate = N(6)-[(R)-dihydrolipoyl]-L-lysyl-[protein] + (6R)-5,10-methylene-5,6,7,8-tetrahydrofolate + NH4(+). Its function is as follows. The glycine cleavage system catalyzes the degradation of glycine. The sequence is that of Aminomethyltransferase from Cutibacterium acnes (strain DSM 16379 / KPA171202) (Propionibacterium acnes).